We begin with the raw amino-acid sequence, 343 residues long: tRNA-splicing endonuclease (343 aa).

Residues tyrosine 277, histidine 288, and lysine 319 contribute to the active site.

This sequence belongs to the tRNA-intron endonuclease family. Archaeal long subfamily. In terms of assembly, homodimer.

It carries out the reaction pretRNA = a 3'-half-tRNA molecule with a 5'-OH end + a 5'-half-tRNA molecule with a 2',3'-cyclic phosphate end + an intron with a 2',3'-cyclic phosphate and a 5'-hydroxyl terminus.. Functionally, endonuclease that removes tRNA introns. Cleaves pre-tRNA at the 5' and 3' splice sites to release the intron. The products are an intron and two tRNA half-molecules bearing 2',3' cyclic phosphate and 5'-OH termini. Recognizes a pseudosymmetric substrate in which 2 bulged loops of 3 bases are separated by a stem of 4 bp. This chain is tRNA-splicing endonuclease, found in Halobacterium salinarum (strain ATCC 29341 / DSM 671 / R1).